The primary structure comprises 113 residues: Protein Wnt-10 (113 aa).

Residue serine 1 is the site of O-palmitoleoyl serine; by PORCN attachment. A disulfide bond links cysteine 79 and cysteine 94.

Belongs to the Wnt family. Post-translationally, palmitoleoylation is required for efficient binding to frizzled receptors. Depalmitoleoylation leads to Wnt signaling pathway inhibition.

Its subcellular location is the secreted. The protein localises to the extracellular space. It localises to the extracellular matrix. Its function is as follows. Ligand for members of the frizzled family of seven transmembrane receptors. Probable developmental protein. May be a signaling molecule which affects the development of discrete regions of tissues. Is likely to signal over only few cell diameters. This chain is Protein Wnt-10 (WNT-10), found in Eptatretus stoutii (Pacific hagfish).